The chain runs to 490 residues: Histone-lysine N-methyltransferase SMYD1 (490 aa).

The 247-residue stretch at E7–I253 folds into the SET domain. K17–R19 provides a ligand contact to S-adenosyl-L-methionine. The Zn(2+) site is built by C52, C55, C65, C68, C74, C78, H86, and C90. The MYND-type zinc-finger motif lies at C52–C90. Residues H135 and N205–H206 contribute to the S-adenosyl-L-methionine site. C208 lines the Zn(2+) pocket. Y270–F272 provides a ligand contact to S-adenosyl-L-methionine. 3 residues coordinate Zn(2+): C274, C276, and C279.

It belongs to the class V-like SAM-binding methyltransferase superfamily. Interacts with HDAC1, HDAC2 and HDAC3. Interacts (via MYND-type zinc finger) with NACA isoform skNAC. As to expression, expression seems mostly restricted to heart and skeletal muscle.

The protein localises to the cytoplasm. The protein resides in the nucleus. It carries out the reaction L-lysyl(4)-[histone H3] + 3 S-adenosyl-L-methionine = N(6),N(6),N(6)-trimethyl-L-lysyl(4)-[histone H3] + 3 S-adenosyl-L-homocysteine + 3 H(+). Methylates histone H3 at 'Lys-4' (H3K4me), seems able to perform both mono-, di-, and trimethylation. Acts as a transcriptional repressor. Essential for cardiomyocyte differentiation and cardiac morphogenesis. The chain is Histone-lysine N-methyltransferase SMYD1 (SMYD1) from Homo sapiens (Human).